We begin with the raw amino-acid sequence, 286 residues long: Protease HtpX homolog (286 aa).

2 helical membrane-spanning segments follow: residues 6–26 (TCFLMVVLMLLFVFVGGYVGG) and 28–48 (QGMIIAFLVALGMNFFSYFFS). His-130 lines the Zn(2+) pocket. Residue Glu-131 is part of the active site. His-134 lines the Zn(2+) pocket. Helical transmembrane passes span 140-160 (ILTGSIAAVMAGAIAMLANFA) and 178-198 (AIMLIIALIMPLAATIIQMAI). Glu-203 lines the Zn(2+) pocket.

The protein belongs to the peptidase M48B family. The cofactor is Zn(2+).

Its subcellular location is the cell inner membrane. The sequence is that of Protease HtpX homolog from Campylobacter curvus (strain 525.92).